Consider the following 124-residue polypeptide: Prefoldin subunit beta (124 aa).

The protein belongs to the prefoldin subunit beta family. As to quaternary structure, heterohexamer of two alpha and four beta subunits.

The protein localises to the cytoplasm. Functionally, molecular chaperone capable of stabilizing a range of proteins. Seems to fulfill an ATP-independent, HSP70-like function in archaeal de novo protein folding. In Pyrobaculum arsenaticum (strain DSM 13514 / JCM 11321 / PZ6), this protein is Prefoldin subunit beta.